A 258-amino-acid polypeptide reads, in one-letter code: uncharacterized protein (258 aa).

In terms of domain architecture, HTH deoR-type spans 3 to 58; the sequence is VAERQQKIVEIVNMRSSIRVSELSDIFSVTEETIRRDLEKLEKEHKLSRSHGGAVS. Residues 20–39 constitute a DNA-binding region (H-T-H motif); it reads IRVSELSDIFSVTEETIRRD.

This is an uncharacterized protein from Bacillus subtilis (strain 168).